The following is a 565-amino-acid chain: Polyadenylate-binding protein 1-A (565 aa).

RRM domains follow at residues 10-88 (SSLY…WSQR), 98-175 (GNVF…PFKS), 188-265 (TNVF…RAQK), and 284-362 (VNLY…LAQR). The segment at 435–466 (YARGQPRQNGPRQNGGQPRQNGPRPDVSGAQP) is disordered. The span at 440 to 454 (PRQNGPRQNGGQPRQ) shows a compositional bias: polar residues. The PABC domain maps to 489 to 565 (SALNLQSIIN…REALEVLGSN (77 aa)).

This sequence belongs to the polyadenylate-binding protein type-1 family.

It localises to the cytoplasm. The protein resides in the nucleus. Binds the poly(A) tail of mRNA. Appears to be an important mediator of the multiple roles of the poly(A) tail in mRNA biogenesis, stability and translation. The polypeptide is Polyadenylate-binding protein 1-A (pabpc1A) (Dictyostelium discoideum (Social amoeba)).